The following is a 207-amino-acid chain: Thiamine-phosphate synthase (207 aa).

4-amino-2-methyl-5-(diphosphooxymethyl)pyrimidine contacts are provided by residues 36 to 40 (QLRMK) and Asn68. Mg(2+) is bound by residues Asp69 and Asp88. Ser106 contacts 4-amino-2-methyl-5-(diphosphooxymethyl)pyrimidine. 132 to 134 (TNT) is a 2-[(2R,5Z)-2-carboxy-4-methylthiazol-5(2H)-ylidene]ethyl phosphate binding site. Lys135 contacts 4-amino-2-methyl-5-(diphosphooxymethyl)pyrimidine. 2-[(2R,5Z)-2-carboxy-4-methylthiazol-5(2H)-ylidene]ethyl phosphate contacts are provided by residues Gly162 and 182 to 183 (VS).

It belongs to the thiamine-phosphate synthase family. Mg(2+) is required as a cofactor.

The enzyme catalyses 2-[(2R,5Z)-2-carboxy-4-methylthiazol-5(2H)-ylidene]ethyl phosphate + 4-amino-2-methyl-5-(diphosphooxymethyl)pyrimidine + 2 H(+) = thiamine phosphate + CO2 + diphosphate. The catalysed reaction is 2-(2-carboxy-4-methylthiazol-5-yl)ethyl phosphate + 4-amino-2-methyl-5-(diphosphooxymethyl)pyrimidine + 2 H(+) = thiamine phosphate + CO2 + diphosphate. It carries out the reaction 4-methyl-5-(2-phosphooxyethyl)-thiazole + 4-amino-2-methyl-5-(diphosphooxymethyl)pyrimidine + H(+) = thiamine phosphate + diphosphate. It participates in cofactor biosynthesis; thiamine diphosphate biosynthesis; thiamine phosphate from 4-amino-2-methyl-5-diphosphomethylpyrimidine and 4-methyl-5-(2-phosphoethyl)-thiazole: step 1/1. Functionally, condenses 4-methyl-5-(beta-hydroxyethyl)thiazole monophosphate (THZ-P) and 2-methyl-4-amino-5-hydroxymethyl pyrimidine pyrophosphate (HMP-PP) to form thiamine monophosphate (TMP). The polypeptide is Thiamine-phosphate synthase (Methanococcus maripaludis (strain DSM 14266 / JCM 13030 / NBRC 101832 / S2 / LL)).